We begin with the raw amino-acid sequence, 203 residues long: Orotate phosphoribosyltransferase (203 aa).

5-phospho-alpha-D-ribose 1-diphosphate is bound by residues Arg94, Lys98, His100, and 120–128 (EDLISTGGS). An orotate-binding site is contributed by Ser124.

This sequence belongs to the purine/pyrimidine phosphoribosyltransferase family. PyrE subfamily. As to quaternary structure, homodimer. The cofactor is Mg(2+).

It catalyses the reaction orotidine 5'-phosphate + diphosphate = orotate + 5-phospho-alpha-D-ribose 1-diphosphate. Its pathway is pyrimidine metabolism; UMP biosynthesis via de novo pathway; UMP from orotate: step 1/2. Catalyzes the transfer of a ribosyl phosphate group from 5-phosphoribose 1-diphosphate to orotate, leading to the formation of orotidine monophosphate (OMP). The polypeptide is Orotate phosphoribosyltransferase (Staphylococcus saprophyticus subsp. saprophyticus (strain ATCC 15305 / DSM 20229 / NCIMB 8711 / NCTC 7292 / S-41)).